We begin with the raw amino-acid sequence, 656 residues long: Squalene-hopene cyclase (656 aa).

The PFTB 1 repeat unit spans residues 68-110; that stretch reads EQKIANYLRRCQSREHWGWPVYYGGEFNISASVQAYFALKMTG. Residue Asp-396 is the Proton donor of the active site. PFTB repeat units lie at residues 417 to 459, 485 to 525, 533 to 582, and 591 to 634; these read LDRA…ALLD, IERG…NASG, VLKC…GLMA, and VKRG…QFFP.

Belongs to the terpene cyclase/mutase family.

The catalysed reaction is squalene = hop-22(29)-ene. It carries out the reaction squalene + H2O = hopan-22-ol. Its function is as follows. Squalene cyclase that catalyzes the oxygen-independent cyclization of squalene into hopanoids, a class of cyclic triterpenoids including hop-22(29)-ene, hop-17(21)-ene, hop-21(22)-ene, and hopan-22-ol. This chain is Squalene-hopene cyclase, found in Schizosaccharomyces japonicus (strain yFS275 / FY16936) (Fission yeast).